A 353-amino-acid chain; its full sequence is Melanin-concentrating hormone receptor 1 (353 aa).

The segment at 1-28 (MDLEASLLPTGPNASNTSDGPDNLTSAG) is disordered. Over 1-45 (MDLEASLLPTGPNASNTSDGPDNLTSAGPPPRTGSISYVNIIMPS) the chain is Extracellular. Residues 12-26 (PNASNTSDGPDNLTS) show a composition bias toward polar residues. 3 N-linked (GlcNAc...) asparagine glycosylation sites follow: Asn13, Asn16, and Asn23. A helical membrane pass occupies residues 46–66 (VFGTICLLGIIGNSMVIFAVV). Over 67 to 79 (KKSKLHWFSNVPD) the chain is Cytoplasmic. Residues 80-100 (IFIINLSVVDLLFLLGMPFMI) traverse the membrane as a helical segment. Residues 101–116 (HQLMGNGVWHFGETMC) lie on the Extracellular side of the membrane. A disulfide bond links Cys116 and Cys194. Residues 117–139 (TLITAMDANSQFTSTYILTAMAI) traverse the membrane as a helical segment. The Cytoplasmic portion of the chain corresponds to 140–161 (DRYLATVHPISSTRFRKPSVAT). The chain crosses the membrane as a helical span at residues 162–182 (LVICLLWALSIISITPVWLYA). The Extracellular segment spans residues 183-204 (RLIPFPGGTVGCGIRLPNPDTD). Residues 205–225 (LYWFTLYQFFLAFALPFVVIT) traverse the membrane as a helical segment. At 226-256 (AAYVRILQRMTSSVAPASQRSIRLRTKRVTR) the chain is on the cytoplasmic side. Residues 257 to 277 (TAIAICLVFFVCWAPYYVLQL) form a helical membrane-spanning segment. Residues 278 to 294 (TQLSISRPTLTFVYLYN) lie on the Extracellular side of the membrane. A helical transmembrane segment spans residues 295–315 (AAISLGYANSCLNPFVYIVLC). Topologically, residues 316-353 (ETFRKRLVLSVKPAAQGQLRAVSNAQTAEEERTESKGT) are cytoplasmic.

The protein belongs to the G-protein coupled receptor 1 family. Interacts with NCDN.

The protein resides in the cell membrane. In terms of biological role, receptor for melanin-concentrating hormone, coupled to both G proteins that inhibit adenylyl cyclase and G proteins that activate phosphoinositide hydrolysis. This chain is Melanin-concentrating hormone receptor 1, found in Sus scrofa (Pig).